The following is a 243-amino-acid chain: Pyridoxine 5'-phosphate synthase (243 aa).

N9 is a binding site for 3-amino-2-oxopropyl phosphate. D11–H12 contributes to the 1-deoxy-D-xylulose 5-phosphate binding site. R20 contributes to the 3-amino-2-oxopropyl phosphate binding site. H45 serves as the catalytic Proton acceptor. Residues R47 and H52 each coordinate 1-deoxy-D-xylulose 5-phosphate. The active-site Proton acceptor is E72. T102 contacts 1-deoxy-D-xylulose 5-phosphate. The active-site Proton donor is the H193. Residues G194 and G215–H216 each bind 3-amino-2-oxopropyl phosphate.

This sequence belongs to the PNP synthase family. In terms of assembly, homooctamer; tetramer of dimers.

It is found in the cytoplasm. The catalysed reaction is 3-amino-2-oxopropyl phosphate + 1-deoxy-D-xylulose 5-phosphate = pyridoxine 5'-phosphate + phosphate + 2 H2O + H(+). It functions in the pathway cofactor biosynthesis; pyridoxine 5'-phosphate biosynthesis; pyridoxine 5'-phosphate from D-erythrose 4-phosphate: step 5/5. Functionally, catalyzes the complicated ring closure reaction between the two acyclic compounds 1-deoxy-D-xylulose-5-phosphate (DXP) and 3-amino-2-oxopropyl phosphate (1-amino-acetone-3-phosphate or AAP) to form pyridoxine 5'-phosphate (PNP) and inorganic phosphate. In Salmonella typhi, this protein is Pyridoxine 5'-phosphate synthase.